Here is a 206-residue protein sequence, read N- to C-terminus: dCTP deaminase, dUMP-forming (206 aa).

Residues 117-122, D135, 143-145, Q163, Y177, K184, and Q188 each bind dCTP; these read RSSFGR and TLE. E145 (proton donor/acceptor) is an active-site residue.

Belongs to the dCTP deaminase family. Homotrimer.

The enzyme catalyses dCTP + 2 H2O = dUMP + NH4(+) + diphosphate. The protein operates within pyrimidine metabolism; dUMP biosynthesis; dUMP from dCTP: step 1/1. Its function is as follows. Bifunctional enzyme that catalyzes both the deamination of dCTP to dUTP and the hydrolysis of dUTP to dUMP without releasing the toxic dUTP intermediate. The chain is dCTP deaminase, dUMP-forming from Methanococcus maripaludis (strain DSM 14266 / JCM 13030 / NBRC 101832 / S2 / LL).